The following is a 330-amino-acid chain: MARMYYDADANLDLLNGKTVAIIGYGSQGHAHALNLRDSGVNVVVGLYPGSKSAAKAEAEGPKVLPVAEAAQAADWIMILLPDEFQKSVFENEIRPALSAGKVLAFAHGFNIHFAQIVPPADVDVVMIAPKSPGHLVRRTYEQGQGVPCLFAIYQDASGQARDRAMAYAKGIGGTRAGILETSFREETETDLFGEQAVLCGGLSALIKAGFETLVEAGYQPELAYFECLHEVKLIVDLIVEGGLAAMRDSISNTAEYGDYVTGPRLITEETKAEMKRVLADIQQGRFALDFVQECGAGKPVMTATRRLEAEHPIESVGKDLRAMFSWLKK.

The KARI N-terminal Rossmann domain maps to 2–182 (ARMYYDADAN…GGTRAGILET (181 aa)). Residues 25–28 (YGSQ), Ser51, Ser53, and 83–86 (DEFQ) contribute to the NADP(+) site. The active site involves His108. NADP(+) is bound at residue Gly134. One can recognise a KARI C-terminal knotted domain in the interval 183–328 (SFREETETDL…KDLRAMFSWL (146 aa)). Mg(2+)-binding residues include Asp191, Glu195, Glu227, and Glu231. Position 252 (Ser252) interacts with substrate.

Belongs to the ketol-acid reductoisomerase family. The cofactor is Mg(2+).

The catalysed reaction is (2R)-2,3-dihydroxy-3-methylbutanoate + NADP(+) = (2S)-2-acetolactate + NADPH + H(+). The enzyme catalyses (2R,3R)-2,3-dihydroxy-3-methylpentanoate + NADP(+) = (S)-2-ethyl-2-hydroxy-3-oxobutanoate + NADPH + H(+). Its pathway is amino-acid biosynthesis; L-isoleucine biosynthesis; L-isoleucine from 2-oxobutanoate: step 2/4. It participates in amino-acid biosynthesis; L-valine biosynthesis; L-valine from pyruvate: step 2/4. Its function is as follows. Involved in the biosynthesis of branched-chain amino acids (BCAA). Catalyzes an alkyl-migration followed by a ketol-acid reduction of (S)-2-acetolactate (S2AL) to yield (R)-2,3-dihydroxy-isovalerate. In the isomerase reaction, S2AL is rearranged via a Mg-dependent methyl migration to produce 3-hydroxy-3-methyl-2-ketobutyrate (HMKB). In the reductase reaction, this 2-ketoacid undergoes a metal-dependent reduction by NADPH to yield (R)-2,3-dihydroxy-isovalerate. The chain is Ketol-acid reductoisomerase (NADP(+)) from Synechococcus sp. (strain ATCC 27144 / PCC 6301 / SAUG 1402/1) (Anacystis nidulans).